Here is a 308-residue protein sequence, read N- to C-terminus: Aspartate carbamoyltransferase catalytic subunit (308 aa).

2 residues coordinate carbamoyl phosphate: Arg59 and Thr60. L-aspartate is bound at residue Lys87. 3 residues coordinate carbamoyl phosphate: Arg109, His137, and Gln140. Residues Arg170 and Arg224 each contribute to the L-aspartate site. Carbamoyl phosphate is bound by residues Gly265 and Pro266.

The protein belongs to the aspartate/ornithine carbamoyltransferase superfamily. ATCase family. In terms of assembly, heterododecamer (2C3:3R2) of six catalytic PyrB chains organized as two trimers (C3), and six regulatory PyrI chains organized as three dimers (R2).

It catalyses the reaction carbamoyl phosphate + L-aspartate = N-carbamoyl-L-aspartate + phosphate + H(+). It functions in the pathway pyrimidine metabolism; UMP biosynthesis via de novo pathway; (S)-dihydroorotate from bicarbonate: step 2/3. Functionally, catalyzes the condensation of carbamoyl phosphate and aspartate to form carbamoyl aspartate and inorganic phosphate, the committed step in the de novo pyrimidine nucleotide biosynthesis pathway. This chain is Aspartate carbamoyltransferase catalytic subunit, found in Flavobacterium psychrophilum (strain ATCC 49511 / DSM 21280 / CIP 103535 / JIP02/86).